The chain runs to 104 residues: Flagellar hook-basal body complex protein FliE (104 aa).

The protein belongs to the FliE family.

It localises to the bacterial flagellum basal body. This Escherichia coli (strain 55989 / EAEC) protein is Flagellar hook-basal body complex protein FliE.